The sequence spans 344 residues: Dihydroorotase (344 aa).

Positions 13 and 15 each coordinate Zn(2+). Substrate contacts are provided by residues 15–17 (HLR) and Asn41. Positions 98, 135, and 173 each coordinate Zn(2+). At Lys98 the chain carries N6-carboxylysine. His135 lines the substrate pocket. Leu218 contributes to the substrate binding site. Residue Asp247 coordinates Zn(2+). The active site involves Asp247. The substrate site is built by His251 and Ala263.

It belongs to the metallo-dependent hydrolases superfamily. DHOase family. Class II DHOase subfamily. In terms of assembly, homodimer. Zn(2+) is required as a cofactor.

The enzyme catalyses (S)-dihydroorotate + H2O = N-carbamoyl-L-aspartate + H(+). It functions in the pathway pyrimidine metabolism; UMP biosynthesis via de novo pathway; (S)-dihydroorotate from bicarbonate: step 3/3. Its function is as follows. Catalyzes the reversible cyclization of carbamoyl aspartate to dihydroorotate. The polypeptide is Dihydroorotase (Neisseria gonorrhoeae (strain NCCP11945)).